Consider the following 359-residue polypeptide: Alpha-N-acetylneuraminide alpha-2,8-sialyltransferase (359 aa).

At 1–28 (MWGRWRGAGGRRGVAQPVIPQMKLLGGR) the chain is on the cytoplasmic side. The helical; Signal-anchor for type II membrane protein transmembrane segment at 29–49 (VPLGASALGLLIVCWFYIFPG) threads the bilayer. Residues 50 to 359 (GERLPGHKEM…KKDVSSKKPH (310 aa)) are Lumenal-facing. N-linked (GlcNAc...) asparagine glycans are attached at residues asparagine 73 and asparagine 121. Cystine bridges form between cysteine 140–cysteine 289 and cysteine 154–cysteine 349. The CMP-N-acetyl-beta-neuraminate site is built by asparagine 145 and asparagine 168. A glycan (N-linked (GlcNAc...) asparagine) is linked at asparagine 247. Positions 276, 277, 278, 298, and 312 each coordinate CMP-N-acetyl-beta-neuraminate. Histidine 324 serves as the catalytic Proton donor/acceptor.

This sequence belongs to the glycosyltransferase 29 family. As to expression, expressed in the dorsal blastopore lip and in the presumptive neuroectoderm in stage 11 embryos. During gastrulation, strongly expressed in the involuting mesoderm. At stages 13 and 16, expressed in the neural plate and neural fold, paraxial mesoderm and notochord. At stages 19 and 22 (neural tube and early tailbud), strongly expressed in the neural tube and notochord. At the tadpole stage, expressed in the head region, branchial arches and otic and optic primordia. Also localized in the notochord and weakly expressed in the somites. In adults, expressed in the brain and ovary. Isoform 2 (short) is expressed at a low level in the adult testis and muscle, and at a high level in the skin. Isoform 1 (long) is expressed at a high level in the adult lung and kidney. Both isoforms 1 and 2 are expressed in the gut and liver.

The protein resides in the golgi apparatus membrane. It catalyses the reaction an N-acetyl-alpha-neuraminyl-(2-&gt;3)-beta-D-galactosyl derivative + CMP-N-acetyl-beta-neuraminate = an N-acetyl-alpha-neuraminyl-(2-&gt;8)-N-acetyl-alpha-neuraminyl-(2-&gt;3)-beta-D-galactosyl derivative + CMP + H(+). The enzyme catalyses a ganglioside GM3 (d18:1(4E)) + CMP-N-acetyl-beta-neuraminate = a ganglioside GD3 (d18:1(4E)) + CMP + H(+). The catalysed reaction is a ganglioside GD3 (d18:1(4E)) + CMP-N-acetyl-beta-neuraminate = a ganglioside GT3 (d18:1(4E)) + CMP + H(+). It carries out the reaction a ganglioside GD1a (d18:1(4E)) + CMP-N-acetyl-beta-neuraminate = a ganglioside GT1a (d18:1(4E)) + CMP + H(+). It catalyses the reaction a ganglioside GT1b (d18:1(4E)) + CMP-N-acetyl-beta-neuraminate = a ganglioside GQ1b (d18:1(4E)) + CMP + H(+). The enzyme catalyses a ganglioside GM1b (d18:1(4E)) + CMP-N-acetyl-beta-neuraminate = a ganglioside GD1c (d18:1(4E)) + CMP + H(+). The catalysed reaction is a ganglioside GD3 + CMP-N-acetyl-beta-neuraminate = a ganglioside GT3 + CMP + H(+). It carries out the reaction [alpha-N-acetylneuraminyl-(2-&gt;8)](n)-alpha-N-acetylneuraminyl-(2-&gt;8)-alpha-N-acetylneuraminyl-(2-&gt;3)-beta-D-galactosyl-(1-&gt;4)-beta-D-glucosyl-(1&lt;-&gt;1)-ceramide + CMP-N-acetyl-beta-neuraminate = [alpha-N-acetylneuraminyl-(2-&gt;8)](n+1)-alpha-N-acetylneuraminyl-(2-&gt;8)-alpha-N-acetylneuraminyl-(2-&gt;3)-beta-D-galactosyl-(1-&gt;4)-beta-D-glucosyl-(1&lt;-&gt;1)-ceramide + CMP + H(+). It participates in protein modification; protein glycosylation. It functions in the pathway lipid metabolism; sphingolipid metabolism. Functionally, catalyzes the addition of sialic acid in alpha 2,8-linkage to the sialic acid moiety of the ganglioside GM3 to form ganglioside GD3; gangliosides are a subfamily of complex glycosphingolipds that contain one or more residues of sialic acid. Glycosphingolipids are required for convergence extension movements during early development. Can catalyze the addition of a second alpha-2,8- sialic acid to GD3 to form GT3. Can use GM1b, GD1a and GT1b as acceptor substrates to synthesize GD1c, GT1a and GQ1b respectively. In Xenopus laevis (African clawed frog), this protein is Alpha-N-acetylneuraminide alpha-2,8-sialyltransferase.